The following is a 276-amino-acid chain: Rho-related protein racO (276 aa).

Gly11–Thr18 provides a ligand contact to GTP. The short motif at Tyr34 to Leu42 is the Effector region element. GTP contacts are provided by residues Glu60 to Phe64 and Ile124 to Asp127. Residues Phe199 to Ser276 are disordered. Residues Lys200–Thr270 show a composition bias toward low complexity. Cysteine methyl ester is present on Cys273. Cys273 carries the S-geranylgeranyl cysteine lipid modification. Positions Lys274–Ser276 are cleaved as a propeptide — removed in mature form.

This sequence belongs to the small GTPase superfamily. Rho family.

Its subcellular location is the cell membrane. This is Rho-related protein racO (racO) from Dictyostelium discoideum (Social amoeba).